The following is a 296-amino-acid chain: Protoheme IX farnesyltransferase (296 aa).

9 consecutive transmembrane segments (helical) span residues 13-33 (IIFG…KGII), 35-55 (YPLF…GCVF), 84-104 (VTLI…YIAA), 107-127 (LAMW…SLYM), 132-152 (VYGT…GYCA), 162-182 (LILL…IAIF), 208-228 (ITLY…VGYA), 229-249 (GYKY…MALR), and 264-284 (FVFS…DFSV).

Belongs to the UbiA prenyltransferase family. Protoheme IX farnesyltransferase subfamily.

It localises to the cell inner membrane. The catalysed reaction is heme b + (2E,6E)-farnesyl diphosphate + H2O = Fe(II)-heme o + diphosphate. Its pathway is porphyrin-containing compound metabolism; heme O biosynthesis; heme O from protoheme: step 1/1. In terms of biological role, converts heme B (protoheme IX) to heme O by substitution of the vinyl group on carbon 2 of heme B porphyrin ring with a hydroxyethyl farnesyl side group. The polypeptide is Protoheme IX farnesyltransferase (Edwardsiella ictaluri (strain 93-146)).